The following is a 569-amino-acid chain: MEFKLNIPNTIIKTLQTIVFFLFVLLAFQIAEAEIHHHTFKIKSKAYTRLCNTNKILTVNGEFPGPTLKAYRGDKLIVNVINNANYNITLHWHGARQIRNPWSDGPEYVTQCPIRPGESYVYRIDLKVEEGTIWWHAHSQWARATVHGAFIVYPKRGSSYPFPKPHREIPLILGEWWKKENIMHIPGKANKTGGEPAISDSYTINGQPGYLYPCSKPETFKITVVRGRRYLLRIINAVMDEELFFAIANHTLTVVAKDGFYLKHFKSDYLMITPGQSMDVLLHANQRPNHYFVAARAYSSAFGAGFDKTTTTAILQYKGDTLNRIKPILPYLPPYNRTEASTRFTNQFRSQRPVNVPVKINTRLLYAISVNLMNCSDDRPCTGPFGKRFSSSINNISFVNPSVDILRAYYRHIGGVFQEDFPRNPPTKFNYTGENLPFPTRFGTKVVVLDYNSSVELILQGTTVWASNIHPIHLHGYNFYVVGSGFGNFDRRKDPLRYNLVDPPEETTVGVPRNGWTAVRFVANNPGVWLLHCHIERHATWGMNTVFIVKDGPTKSSRMVKPPPDLPSC.

An N-terminal signal peptide occupies residues 1–33 (MEFKLNIPNTIIKTLQTIVFFLFVLLAFQIAEA). Plastocyanin-like domains are found at residues 41 to 157 (KIKS…PKRG) and 167 to 320 (REIP…YKGD). Asn-87 carries an N-linked (GlcNAc...) asparagine glycan. Residues His-91, His-93, His-136, and His-138 each coordinate Cu cation. Asn-190, Asn-249, Asn-336, Asn-374, Asn-395, Asn-430, and Asn-452 each carry an N-linked (GlcNAc...) asparagine glycan. The Plastocyanin-like 3 domain occupies 420–553 (DFPRNPPTKF…NTVFIVKDGP (134 aa)). 8 residues coordinate Cu cation: His-470, His-473, His-475, His-532, Cys-533, His-534, His-538, and Met-543.

It belongs to the multicopper oxidase family. Requires Cu cation as cofactor. As to expression, expressed at low levels in flowers and siliques.

The protein localises to the secreted. It localises to the extracellular space. The protein resides in the apoplast. It catalyses the reaction 4 hydroquinone + O2 = 4 benzosemiquinone + 2 H2O. Its function is as follows. Lignin degradation and detoxification of lignin-derived products. This chain is Laccase-14 (LAC14), found in Arabidopsis thaliana (Mouse-ear cress).